We begin with the raw amino-acid sequence, 382 residues long: Proton extrusion protein PxcA (382 aa).

4 consecutive transmembrane segments (helical) span residues 156 to 176 (TLIS…VQQV), 257 to 277 (AVKN…VCVF), 305 to 325 (IILF…TVLL), and 340 to 360 (FILL…KYWI).

This sequence belongs to the CemA family.

The protein resides in the cell inner membrane. Functionally, required for H(+) efflux immediately after light irradiation to form a rapid H(+) concentration gradient across the thylakoid membranes. Together with PxcL, contributes to transient H(+) uptake following dark to light transition. The chain is Proton extrusion protein PxcA from Synechococcus sp. (strain WH7803).